The following is a 398-amino-acid chain: Bifunctional enzyme IspD/IspF (398 aa).

The interval methionine 1–isoleucine 234 is 2-C-methyl-D-erythritol 4-phosphate cytidylyltransferase. The tract at residues arginine 235 to valine 398 is 2-C-methyl-D-erythritol 2,4-cyclodiphosphate synthase. 2 residues coordinate a divalent metal cation: aspartate 241 and histidine 243. 4-CDP-2-C-methyl-D-erythritol 2-phosphate-binding positions include aspartate 241–histidine 243 and histidine 267–serine 268. Histidine 275 contacts a divalent metal cation. 4-CDP-2-C-methyl-D-erythritol 2-phosphate-binding positions include aspartate 289–glycine 291, threonine 365–glutamate 368, phenylalanine 372, and arginine 375.

The protein in the N-terminal section; belongs to the IspD/TarI cytidylyltransferase family. IspD subfamily. In the C-terminal section; belongs to the IspF family. A divalent metal cation is required as a cofactor.

The catalysed reaction is 2-C-methyl-D-erythritol 4-phosphate + CTP + H(+) = 4-CDP-2-C-methyl-D-erythritol + diphosphate. The enzyme catalyses 4-CDP-2-C-methyl-D-erythritol 2-phosphate = 2-C-methyl-D-erythritol 2,4-cyclic diphosphate + CMP. The protein operates within isoprenoid biosynthesis; isopentenyl diphosphate biosynthesis via DXP pathway; isopentenyl diphosphate from 1-deoxy-D-xylulose 5-phosphate: step 2/6. It participates in isoprenoid biosynthesis; isopentenyl diphosphate biosynthesis via DXP pathway; isopentenyl diphosphate from 1-deoxy-D-xylulose 5-phosphate: step 4/6. Bifunctional enzyme that catalyzes the formation of 4-diphosphocytidyl-2-C-methyl-D-erythritol from CTP and 2-C-methyl-D-erythritol 4-phosphate (MEP) (IspD), and catalyzes the conversion of 4-diphosphocytidyl-2-C-methyl-D-erythritol 2-phosphate (CDP-ME2P) to 2-C-methyl-D-erythritol 2,4-cyclodiphosphate (ME-CPP) with a corresponding release of cytidine 5-monophosphate (CMP) (IspF). The chain is Bifunctional enzyme IspD/IspF from Bradyrhizobium diazoefficiens (strain JCM 10833 / BCRC 13528 / IAM 13628 / NBRC 14792 / USDA 110).